Here is a 285-residue protein sequence, read N- to C-terminus: V-set and transmembrane domain-containing protein 2B (285 aa).

Residues 1–28 (MEQRNRLGALGYLLPLLLHSLLLFVADA) form the signal peptide. In terms of domain architecture, Ig-like V-type spans 29 to 143 (TFTEVPKDVT…DDDTQEHKAQ (115 aa)). Topologically, residues 29–263 (TFTEVPKDVT…HGSGTGPGYS (235 aa)) are extracellular. Cysteine 49 and cysteine 127 are joined by a disulfide. The disordered stretch occupies residues 160–225 (AEAVSHIQSS…AAAAAASATH (66 aa)). Low complexity-rich tracts occupy residues 176–189 (ASSA…GAAV) and 208–225 (PAGS…SATH). Residues 264–284 (ADPLLSLLLLALHKFLHPLLG) form a helical membrane-spanning segment. Residue histidine 285 is a topological domain, cytoplasmic.

The protein resides in the membrane. The polypeptide is V-set and transmembrane domain-containing protein 2B (Vstm2b) (Mus musculus (Mouse)).